The primary structure comprises 155 residues: uncharacterized protein (155 aa).

A disordered region spans residues 1 to 34; sequence MESLQTPQHRENQDKREKEYGVKHMPMGNNAGNL. Residues 8–22 are compositionally biased toward basic and acidic residues; that stretch reads QHRENQDKREKEYGV. A helical transmembrane segment spans residues 115-135; it reads MSLLLLPAFSGLTWAPFLFLF.

The protein localises to the membrane. This is an uncharacterized protein from Homo sapiens (Human).